The sequence spans 300 residues: Sodium/potassium/calcium exchanger 1 (300 aa).

A disordered region spans residues 1–251 (DPGSQGVGAE…ENEQPLSLEW (251 aa)). 5 stretches are compositionally biased toward acidic residues: residues 92–102 (GEVEGDEDEGE), 109–119 (GEVEGDEDEGE), 126–136 (GEVEGDEDEGE), 158–175 (GEVE…DEGE), and 215–244 (GDSE…EENE). Residues 259–275 (AIYLFLLPIVFPLWLTV) form a helical membrane-spanning segment.

This sequence belongs to the Ca(2+):cation antiporter (CaCA) (TC 2.A.19) family. SLC24A subfamily. The uncleaved signal sequence is required for efficient membrane targeting and proper membrane integration and topology.

The protein localises to the cell membrane. The enzyme catalyses Ca(2+)(out) + K(+)(out) + 4 Na(+)(in) = Ca(2+)(in) + K(+)(in) + 4 Na(+)(out). In terms of biological role, calcium, potassium:sodium antiporter that transports 1 Ca(2+) and 1 K(+) in exchange for 4 Na(+). Critical component of the visual transduction cascade, controlling the calcium concentration of outer segments during light and darkness. Light causes a rapid lowering of cytosolic free calcium in the outer segment of both retinal rod and cone photoreceptors and the light-induced lowering of calcium is caused by extrusion via this protein which plays a key role in the process of light adaptation. This chain is Sodium/potassium/calcium exchanger 1 (SLC24A1), found in Bison bison (American bison).